The following is a 239-amino-acid chain: DNA repair protein RecO (239 aa).

The protein belongs to the RecO family.

Its function is as follows. Involved in DNA repair and RecF pathway recombination. The sequence is that of DNA repair protein RecO from Christiangramia forsetii (strain DSM 17595 / CGMCC 1.15422 / KT0803) (Gramella forsetii).